A 1034-amino-acid chain; its full sequence is Condensin complex subunit 3 (1034 aa).

7 HEAT repeats span residues 95 to 132 (SPVN…NLPE), 139 to 176 (DLFD…PSDP), 178 to 213 (CPVS…SLPK), 242 to 279 (LTIA…QYSE), 281 to 317 (DVLD…LVQN), 439 to 476 (TSLI…PIVT), and 618 to 655 (DFAR…LFGM). Polar residues predominate over residues 663–672 (TNPDDSQCKA). The segment at 663–693 (TNPDDSQCKAQENADEDISEQEKPGSVDENL) is disordered. HEAT repeat units lie at residues 703–740 (ATVN…SGRL), 785–823 (CFAE…DLTR), and 878–915 (ENST…SGRE). Basic and acidic residues predominate over residues 909-949 (QLRSGREEHRVSKETEPQVSKETEDRTNLQENEEGKQKDEA). Positions 909-1034 (QLRSGREEHR…LSKLLNEEAN (126 aa)) are disordered. Over residues 964–984 (RGKATKGRRKGPAAAATRRKA) the composition is skewed to basic residues. Basic and acidic residues predominate over residues 985–999 (SKAEEAEAEMERQEE).

The protein belongs to the CND3 (condensin subunit 3) family. As to quaternary structure, component of the condensin complex, which contains the XCAP-E/SMC2 and XCAP-C/SMC4 heterodimer, and three non SMC subunits that probably regulate the complex: XCAP-H/NCAPH, XCAP-D2/NCAPD2 and XCAP-G/NCAPG. Phosphorylated by cdk1. Its phosphorylation, as well as that of XCAP-D2 and XCAP-H subunits, activates the condensin complex and is required for chromosome condensation.

Its subcellular location is the nucleus. It is found in the cytoplasm. The protein localises to the chromosome. Functionally, regulatory subunit of the condensin complex, a complex required for conversion of interphase chromatin into mitotic-like condense chromosomes. The condensin complex probably introduces positive supercoils into relaxed DNA in the presence of type I topoisomerases and converts nicked DNA into positive knotted forms in the presence of type II topoisomerase. The chain is Condensin complex subunit 3 (ncapg) from Xenopus laevis (African clawed frog).